The chain runs to 79 residues: Conotoxin Vi6.3 (79 aa).

An N-terminal signal peptide occupies residues 1 to 22 (MKLTCVLIITVLFLTASQLITA). Positions 23–47 (DYSRDQRQYRAVRLGDEMRNFKGAR) are excised as a propeptide. 3 cysteine pairs are disulfide-bonded: cysteine 49/cysteine 62, cysteine 56/cysteine 67, and cysteine 61/cysteine 77. A 4-hydroxyproline mark is found at proline 60 and proline 63.

It belongs to the conotoxin O1 superfamily. As to expression, expressed by the venom duct.

It is found in the secreted. Functionally, ion channel inhibitor that inhibits the increase in intracellular calcium upon depolarization in DRG neurons. In vivo, both intraperitoneal and intracranial injections into mice induce hyperactivity. This chain is Conotoxin Vi6.3, found in Conus virgo (Virgin cone).